The chain runs to 650 residues: Aminopeptidase B (650 aa).

Serine 7 carries the phosphoserine modification. 298–302 (GGMEN) contributes to the substrate binding site. Histidine 325 contacts Zn(2+). Glutamate 326 (proton acceptor) is an active-site residue. Histidine 329 and glutamate 348 together coordinate Zn(2+). At lysine 446 the chain carries N6-acetyllysine.

The protein belongs to the peptidase M1 family. Monomer. The cofactor is Zn(2+). Widely expressed.

It is found in the secreted. The enzyme catalyses Release of N-terminal Arg and Lys from oligopeptides when P1' is not Pro. Also acts on arylamides of Arg and Lys.. Its function is as follows. Exopeptidase which selectively removes arginine and/or lysine residues from the N-terminus of several peptide substrates including Arg(0)-Leu-enkephalin, Arg(0)-Met-enkephalin and Arg(-1)-Lys(0)-somatostatin-14. Can hydrolyze leukotriene A4 (LTA-4) into leukotriene B4 (LTB-4). The polypeptide is Aminopeptidase B (Rnpep) (Rattus norvegicus (Rat)).